The following is a 245-amino-acid chain: Large ribosomal subunit protein uL29m (245 aa).

Composition is skewed to low complexity over residues 36 to 49 and 234 to 245; these read SFNS…TSSS and STKSETTTSKNI. Disordered stretches follow at residues 36–98 and 207–245; these read SFNS…NPDH and RPSP…SKNI.

The protein belongs to the universal ribosomal protein uL29 family. In terms of assembly, component of the mitochondrial large ribosomal subunit. Mature mitochondrial ribosomes consist of a small (37S) and a large (54S) subunit. The 37S subunit contains at least 33 different proteins and 1 molecule of RNA (15S). The 54S subunit contains at least 45 different proteins and 1 molecule of RNA (21S).

The protein resides in the mitochondrion. The sequence is that of Large ribosomal subunit protein uL29m (MRPL4) from Coccidioides immitis (strain RS) (Valley fever fungus).